The chain runs to 3412 residues: Genome polyprotein (3412 aa).

The interval 1 to 30 is disordered; it reads MAGKAILKGKGGGPPRRVSKETAKKTRQSR. The Cytoplasmic segment spans residues 1–98; the sequence is MAGKAILKGK…LQRRGKRRSA (98 aa). Positions 97-117 are cleaved as a propeptide — ER anchor for the capsid protein C, removed in mature form by serine protease NS3; sequence SAVDWTGWLLVVVLLGVTLAA. A helical transmembrane segment spans residues 99 to 119; the sequence is VDWTGWLLVVVLLGVTLAATV. Topologically, residues 120–242 are extracellular; that stretch reads RKERDGTTVI…HLTRVEGWVW (123 aa). N-linked (GlcNAc...) asparagine; by host glycosylation occurs at Asn144. The chain crosses the membrane as a helical span at residues 243-260; it reads KNKVLTLAVIAVVWLTVE. A topological domain (cytoplasmic) is located at residue Ser261. The helical transmembrane segment at 262-280 threads the bilayer; that stretch reads VVTRVAVVVVLLCLAPVYA. The Extracellular segment spans residues 281-727; sequence SRCTHLENRD…HTVLGGAFNS (447 aa). 6 disulfides stabilise this stretch: Cys283/Cys310, Cys340/Cys396, Cys340/Cys401, Cys354/Cys385, Cys372/Cys396, and Cys372/Cys401. Residues 378-391 form a fusion peptide region; it reads DRGWGNHCGLFGKG. N-linked (GlcNAc...) asparagine; by host glycosylation is present at Asn434. Intrachain disulfides connect Cys466–Cys570 and Cys587–Cys618. Residues 728 to 748 traverse the membrane as a helical segment; sequence LFGGVGFLPKILVGVVLAWLG. Over 749–755 the chain is Cytoplasmic; that stretch reads LNMRNPT. A helical membrane pass occupies residues 756 to 776; the sequence is MSMSFLLAGGLVLAMTLGVGA. Residues 777-1187 are Extracellular-facing; the sequence is DVGCAVDTER…LVKIESLVRY (411 aa). Cystine bridges form between Cys780/Cys791, Cys831/Cys920, Cys955/Cys1000, Cys1057/Cys1106, Cys1068/Cys1090, and Cys1089/Cys1093. N-linked (GlcNAc...) asparagine; by host glycans are attached at residues Asn861, Asn983, and Asn999. Residues 1188-1208 traverse the membrane as a helical segment; that stretch reads VVAVGITFHLELGPEIVALTL. Topologically, residues 1209–1236 are cytoplasmic; sequence LQAVFELRVGLLSAFALRSNLTVREMVT. A helical membrane pass occupies residues 1237-1257; the sequence is IYFLLLVLELGLPSEGLGALW. The Lumenal segment spans residues 1258 to 1293; sequence KWGDALAMGALIFRACTAEEKTGVGLLLMALMTQQD. A helical membrane pass occupies residues 1294–1314; that stretch reads LATVHYGLMLFLGVASCCSIW. The Cytoplasmic segment spans residues 1315 to 1327; the sequence is KLIRGHREQKGLT. Residues 1328-1348 traverse the membrane as a helical segment; sequence WIVPLAGLLGGEGSGVRLVAF. Residues 1349-1359 lie on the Cytoplasmic side of the membrane; it reads WELTVHGRRRS. The helical transmembrane segment at 1360-1378 threads the bilayer; the sequence is FSEPLTVVGVMLTLASGMI. Residues 1379 to 1382 are Lumenal-facing; sequence RHTS. Residues 1383–1403 form a helical membrane-spanning segment; the sequence is QEALCALAVASFLLLMLVLGT. Over 1404-1454 the chain is Cytoplasmic; that stretch reads RKMQLVAEWSGCVEWHPELMNEGGEVSLRVRQDSMGNFHLTELEKEERVMA. Residues 1410–1449 are interacts with and activates NS3 protease; it reads AEWSGCVEWHPELMNEGGEVSLRVRQDSMGNFHLTELEKE. The helical intramembrane region spans 1455–1475; sequence FWLLAGLAASAFHWSGILGVM. Over 1476-2160 the chain is Cytoplasmic; sequence GLWTLSEMLR…KMAERDAPEA (685 aa). The 180-residue stretch at 1490–1669 folds into the Peptidase S7 domain; that stretch reads SGLVFSGQGG…EAEKSRPNLP (180 aa). Active-site charge relay system; for serine protease NS3 activity residues include His1543, Asp1567, and Ser1627. Positions 1675–1831 constitute a Helicase ATP-binding domain; that stretch reads TGWTAKGQIT…ESNGAISSEE (157 aa). 1688–1695 provides a ligand contact to ATP; sequence MHPGSGKT. The short motif at 1779–1782 is the DEAH box element; the sequence is DEAH. The Helicase C-terminal domain maps to 1841–2000; sequence DGFDWITEYE…TLRGPVATFY (160 aa). The residue at position 1883 (Lys1883) is an N6-acetyllysine; by host. Residues 2161 to 2181 form a helical membrane-spanning segment; sequence FLTVVEMMVLGLATLGVVWCF. Residues 2182-2189 are Lumenal-facing; it reads VVRTSISR. The helical intramembrane region spans 2190–2210; the sequence is MMLGTLVLLASLALLWAGGVS. Tyr2211 is a topological domain (lumenal). Residues 2212 to 2232 traverse the membrane as a helical segment; the sequence is GNMAGVALIFYTLLTVLQPEA. At 2233-2244 the chain is on the cytoplasmic side; the sequence is GKQRSSDDNKLA. Residues 2245–2265 form a helical membrane-spanning segment; sequence YFLLTLCSLAGLVAANEMGFL. The Lumenal portion of the chain corresponds to 2266-2299; the sequence is EKTKADLSTVLWSEHEELRSWEEWTNIDIQPARS. The helical intramembrane region spans 2300–2320; the sequence is WGTYVLVVSLFTPYIIHQLQT. Residues 2321 to 2343 are Lumenal-facing; that stretch reads KIQQLVNSAVATGAQAMRDLGGG. Residues 2344–2364 constitute an intramembrane region (helical); the sequence is APFFGVAGHVMALGVVSLVGA. The Lumenal portion of the chain corresponds to 2365 to 2368; it reads TPTS. The helical transmembrane segment at 2369 to 2389 threads the bilayer; that stretch reads LVVGVGLAAFHLAIVVSGLEA. Topologically, residues 2390–2430 are cytoplasmic; it reads ELTQRAHKVFFSAMVRNPMVDGDVINPFGEGEAKPALYERK. A helical transmembrane segment spans residues 2431–2451; the sequence is MSLVLAIVLCLMSVVMNRTVP. At 2452 to 2476 the chain is on the lumenal side; that stretch reads STPRLLLWDWRQRDNCSNQRRTPFG. Residues 2477-2497 traverse the membrane as a helical segment; sequence RCQACGLSGVVRGSLWGFCPL. Topologically, residues 2498-3412 are cytoplasmic; the sequence is GHRLWLRASG…WESKLESSII (915 aa). The region spanning 2511–2775 is the mRNA cap 0-1 NS5-type MT domain; it reads GGSEGDTLGD…ELDLGVGTRC (265 aa). Residue Ser2566 coordinates S-adenosyl-L-methionine. Phosphoserine is present on Ser2566. Lys2571 functions as the For 2'-O-MTase activity in the catalytic mechanism. The S-adenosyl-L-methionine site is built by Gly2596, Trp2597, Ile2615, Asp2641, and Val2642. The active-site For 2'-O-MTase activity is the Asp2656. Ile2657 serves as a coordination point for S-adenosyl-L-methionine. Catalysis depends on for 2'-O-MTase activity residues Lys2693 and Glu2729. Residues 2729–2733 are interaction with host SCRIB; sequence EMYYS. Tyr2731 is an S-adenosyl-L-methionine binding site. Residues Glu2948, His2952, Cys2957, and Cys2960 each contribute to the Zn(2+) site. Positions 3038–3187 constitute a RdRp catalytic domain; it reads GLFYADDTAG…RPVDDRFSGA (150 aa). Zn(2+) contacts are provided by His3222, Cys3238, and Cys3357.

The protein in the N-terminal section; belongs to the class I-like SAM-binding methyltransferase superfamily. mRNA cap 0-1 NS5-type methyltransferase family. In terms of assembly, homodimer. Interacts (via N-terminus) with host EXOC1 (via C-terminus); this interaction results in EXOC1 degradation through the proteasome degradation pathway. Forms heterodimers with envelope protein E in the endoplasmic reticulum and Golgi. As to quaternary structure, homodimer; in the endoplasmic reticulum and Golgi. Interacts with protein prM. Interacts with non-structural protein 1. In terms of assembly, homodimer; Homohexamer when secreted. Interacts with envelope protein E. Interacts (via N-terminus) with serine protease NS3. As to quaternary structure, forms a heterodimer with serine protease NS3. May form homooligomers. In terms of assembly, forms a heterodimer with NS2B. Interacts with non-structural protein 2A (via N-terminus). Interacts with NS4B. Interacts with unphosphorylated RNA-directed RNA polymerase NS5; this interaction stimulates RNA-directed RNA polymerase NS5 guanylyltransferase activity. Interacts with serine protease NS3. Interacts with NS1. As to quaternary structure, homodimer. Interacts with host STAT2; this interaction inhibits the phosphorylation of the latter, and, when all viral proteins are present (polyprotein), targets STAT2 for degradation. Interacts with serine protease NS3. Interacts with host SCRIB; this interaction targets NS5 to the cell membrane periphery and nucleus, thereby allowing efficient host nuclear STAT1 inhibition. Specific enzymatic cleavages in vivo yield mature proteins. Cleavages in the lumen of endoplasmic reticulum are performed by host signal peptidase, whereas cleavages in the cytoplasmic side are performed by serine protease NS3. Signal cleavage at the 2K-4B site requires a prior NS3 protease-mediated cleavage at the 4A-2K site. Post-translationally, cleaved in post-Golgi vesicles by a host furin, releasing the mature small envelope protein M, and peptide pr. This cleavage is incomplete as up to 30% of viral particles still carry uncleaved prM. In terms of processing, N-glycosylated. N-glycosylated. The excreted form is glycosylated and this is required for efficient secretion of the protein from infected cells. Post-translationally, acetylated by host KAT5. Acetylation modulates NS3 RNA-binding and unwinding activities and plays an important positive role for viral replication. In terms of processing, phosphorylated on serines residues. This phosphorylation may trigger NS5 nuclear localization.

It localises to the virion. It is found in the host nucleus. Its subcellular location is the host cytoplasm. The protein localises to the host perinuclear region. The protein resides in the secreted. It localises to the virion membrane. It is found in the host endoplasmic reticulum membrane. It catalyses the reaction Selective hydrolysis of -Xaa-Xaa-|-Yaa- bonds in which each of the Xaa can be either Arg or Lys and Yaa can be either Ser or Ala.. The catalysed reaction is RNA(n) + a ribonucleoside 5'-triphosphate = RNA(n+1) + diphosphate. It carries out the reaction a ribonucleoside 5'-triphosphate + H2O = a ribonucleoside 5'-diphosphate + phosphate + H(+). The enzyme catalyses ATP + H2O = ADP + phosphate + H(+). It catalyses the reaction a 5'-end (5'-triphosphoguanosine)-ribonucleoside in mRNA + S-adenosyl-L-methionine = a 5'-end (N(7)-methyl 5'-triphosphoguanosine)-ribonucleoside in mRNA + S-adenosyl-L-homocysteine. The catalysed reaction is a 5'-end (N(7)-methyl 5'-triphosphoguanosine)-ribonucleoside in mRNA + S-adenosyl-L-methionine = a 5'-end (N(7)-methyl 5'-triphosphoguanosine)-(2'-O-methyl-ribonucleoside) in mRNA + S-adenosyl-L-homocysteine + H(+). Its function is as follows. Plays a role in virus budding by binding to the cell membrane and gathering the viral RNA into a nucleocapsid that forms the core of a mature virus particle. During virus entry, may induce genome penetration into the host cytoplasm after hemifusion induced by the surface proteins. Can migrate to the cell nucleus where it modulates host functions. Inhibits RNA silencing by interfering with host Dicer. In terms of biological role, prevents premature fusion activity of envelope proteins in trans-Golgi by binding to envelope protein E at pH6.0. After virion release in extracellular space, gets dissociated from E dimers. Functionally, acts as a chaperone for envelope protein E during intracellular virion assembly by masking and inactivating envelope protein E fusion peptide. prM is the only viral peptide matured by host furin in the trans-Golgi network probably to avoid catastrophic activation of the viral fusion activity in acidic Golgi compartment prior to virion release. prM-E cleavage is inefficient, and many virions are only partially matured. These uncleaved prM would play a role in immune evasion. Its function is as follows. May play a role in virus budding. Exerts cytotoxic effects by activating a mitochondrial apoptotic pathway through M ectodomain. May display a viroporin activity. Binds to host cell surface receptor and mediates fusion between viral and cellular membranes. Envelope protein is synthesized in the endoplasmic reticulum in the form of heterodimer with protein prM. They play a role in virion budding in the ER, and the newly formed immature particle is covered with 60 spikes composed of heterodimer between precursor prM and envelope protein E. The virion is transported to the Golgi apparatus where the low pH causes dissociation of PrM-E heterodimers and formation of E homodimers. prM-E cleavage is inefficient, and many virions are only partially matured. These uncleaved prM would play a role in immune evasion. In terms of biological role, involved in immune evasion, pathogenesis and viral replication. Once cleaved off the polyprotein, is targeted to three destinations: the viral replication cycle, the plasma membrane and the extracellular compartment. Essential for viral replication. Required for formation of the replication complex and recruitment of other non-structural proteins to the ER-derived membrane structures. Excreted as a hexameric lipoparticle that plays a role against host immune response. Antagonizing the complement function. Binds to the host macrophages and dendritic cells. Inhibits signal transduction originating from Toll-like receptor 3 (TLR3). Functionally, component of the viral RNA replication complex that functions in virion assembly and antagonizes the host immune response. Its function is as follows. Required cofactor for the serine protease function of NS3. May have membrane-destabilizing activity and form viroporins. Displays three enzymatic activities: serine protease, NTPase and RNA helicase. NS3 serine protease, in association with NS2B, performs its autocleavage and cleaves the polyprotein at dibasic sites in the cytoplasm: C-prM, NS2A-NS2B, NS2B-NS3, NS3-NS4A, NS4A-2K and NS4B-NS5. NS3 RNA helicase binds RNA and unwinds dsRNA in the 3' to 5' direction. In terms of biological role, regulates the ATPase activity of the NS3 helicase activity. NS4A allows NS3 helicase to conserve energy during unwinding. Functionally, functions as a signal peptide for NS4B and is required for the interferon antagonism activity of the latter. Its function is as follows. Induces the formation of ER-derived membrane vesicles where the viral replication takes place. Inhibits interferon (IFN)-induced host STAT1 phosphorylation and nuclear translocation, thereby preventing the establishment of cellular antiviral state by blocking the IFN-alpha/beta pathway. Inhibits STAT2 translocation in the nucleus after IFN-alpha treatment. Replicates the viral (+) and (-) genome, and performs the capping of genomes in the cytoplasm. NS5 methylates viral RNA cap at guanine N-7 and ribose 2'-O positions. Besides its role in RNA genome replication, also prevents the establishment of cellular antiviral state by blocking the interferon-alpha/beta (IFN-alpha/beta) signaling pathway. Inhibits host TYK2 and STAT2 phosphorylation, thereby preventing activation of JAK-STAT signaling pathway. The protein is Genome polyprotein of Homo sapiens (Human).